Reading from the N-terminus, the 96-residue chain is Beta-defensin 20 (96 aa).

The first 21 residues, 1–21 (MKLPQLLLILLFVVLADSVQP), serve as a signal peptide directing secretion. Cystine bridges form between C24–C52, C32–C46, and C36–C53.

This sequence belongs to the beta-defensin family.

The protein localises to the secreted. Has antibacterial activity. The protein is Beta-defensin 20 (Defb20) of Rattus norvegicus (Rat).